The following is a 432-amino-acid chain: Glutamyl-tRNA reductase (432 aa).

Substrate contacts are provided by residues 49–52 (TCNR), Ser109, 114–116 (EGQ), and Gln120. Cys50 (nucleophile) is an active-site residue. 198-203 (GAGRMS) lines the NADP(+) pocket.

The protein belongs to the glutamyl-tRNA reductase family. Homodimer.

It carries out the reaction (S)-4-amino-5-oxopentanoate + tRNA(Glu) + NADP(+) = L-glutamyl-tRNA(Glu) + NADPH + H(+). The protein operates within porphyrin-containing compound metabolism; protoporphyrin-IX biosynthesis; 5-aminolevulinate from L-glutamyl-tRNA(Glu): step 1/2. Its pathway is porphyrin-containing compound metabolism; chlorophyll biosynthesis. Its function is as follows. Catalyzes the NADPH-dependent reduction of glutamyl-tRNA(Glu) to glutamate 1-semialdehyde (GSA). This is Glutamyl-tRNA reductase from Parasynechococcus marenigrum (strain WH8102).